We begin with the raw amino-acid sequence, 318 residues long: MLPITNSLTYIIPILIAVAFLTLTERKILGYMQLRKGPNITGPYGLLQPIADGLKLFIKEPIRPLNTSPTLLILSPILALTTAMLIWTPIPMPHALTNLNLGLLSILAISSMAVNSTLWAGWASNSKYALIGSLRAVAQTISYEVTLGIILLSILILTGGFTMQLLTTTQKHIWLLTTSWPLTMMWFISTLAETNRAPFDLTEGESELVSGFNVEYAGGPFALFFLAEYTNIISMNLLTCIMFINPGPTQHPELFLINLVTKTLLLSLTFLWIRASYPRFRYDQLMHLLWKQFLPLTMALCLLQASLLVSISGIPPLP.

The next 8 membrane-spanning stretches (helical) occupy residues 1–21 (MLPI…VAFL), 71–91 (LLIL…TPIP), 101–121 (LGLL…LWAG), 145–165 (VTLG…TMQL), 172–192 (HIWL…STLA), 224–244 (FFLA…IMFI), 253–273 (ELFL…FLWI), and 294–314 (LPLT…ISGI).

It belongs to the complex I subunit 1 family.

The protein localises to the mitochondrion inner membrane. It carries out the reaction a ubiquinone + NADH + 5 H(+)(in) = a ubiquinol + NAD(+) + 4 H(+)(out). Its function is as follows. Core subunit of the mitochondrial membrane respiratory chain NADH dehydrogenase (Complex I) that is believed to belong to the minimal assembly required for catalysis. Complex I functions in the transfer of electrons from NADH to the respiratory chain. The immediate electron acceptor for the enzyme is believed to be ubiquinone. This is NADH-ubiquinone oxidoreductase chain 1 (MT-ND1) from Varanus rudicollis (Rough-necked monitor lizard).